Consider the following 89-residue polypeptide: Small ribosomal subunit protein uS14 (89 aa).

This sequence belongs to the universal ribosomal protein uS14 family. Part of the 30S ribosomal subunit. Contacts proteins S3 and S10.

Functionally, binds 16S rRNA, required for the assembly of 30S particles and may also be responsible for determining the conformation of the 16S rRNA at the A site. The polypeptide is Small ribosomal subunit protein uS14 (Flavobacterium johnsoniae (strain ATCC 17061 / DSM 2064 / JCM 8514 / BCRC 14874 / CCUG 350202 / NBRC 14942 / NCIMB 11054 / UW101) (Cytophaga johnsonae)).